A 310-amino-acid chain; its full sequence is Putative S-adenosyl-L-methionine-dependent methyltransferase MUL_4763 (310 aa).

S-adenosyl-L-methionine is bound by residues D137 and 166 to 167 (DL).

The protein belongs to the UPF0677 family.

Exhibits S-adenosyl-L-methionine-dependent methyltransferase activity. This chain is Putative S-adenosyl-L-methionine-dependent methyltransferase MUL_4763, found in Mycobacterium ulcerans (strain Agy99).